Consider the following 129-residue polypeptide: MAKTPVRARKRVKKQVVDGVAHIHASFNNTIVTITDRQGNALAWATAGGSGFRGSRKSTPFAAQVAAERCAEAVKEFGLKNLEVMVKGPGPGRESTIRALNAAGFRITNITDVTPIPHNGCRPPKKRRV.

This sequence belongs to the universal ribosomal protein uS11 family. Part of the 30S ribosomal subunit. Interacts with proteins S7 and S18. Binds to IF-3.

In terms of biological role, located on the platform of the 30S subunit, it bridges several disparate RNA helices of the 16S rRNA. Forms part of the Shine-Dalgarno cleft in the 70S ribosome. The chain is Small ribosomal subunit protein uS11 from Mannheimia succiniciproducens (strain KCTC 0769BP / MBEL55E).